The primary structure comprises 208 residues: Probable nicotinate-nucleotide adenylyltransferase (208 aa).

Belongs to the NadD family.

The enzyme catalyses nicotinate beta-D-ribonucleotide + ATP + H(+) = deamido-NAD(+) + diphosphate. It participates in cofactor biosynthesis; NAD(+) biosynthesis; deamido-NAD(+) from nicotinate D-ribonucleotide: step 1/1. Functionally, catalyzes the reversible adenylation of nicotinate mononucleotide (NaMN) to nicotinic acid adenine dinucleotide (NaAD). The chain is Probable nicotinate-nucleotide adenylyltransferase from Trichormus variabilis (strain ATCC 29413 / PCC 7937) (Anabaena variabilis).